Consider the following 323-residue polypeptide: Fructose-1,6-bisphosphatase class 1 (323 aa).

Positions 88, 107, 109, and 110 each coordinate Mg(2+). Residues 110–113 (DGSS) and asparagine 200 each bind substrate. A Mg(2+)-binding site is contributed by glutamate 272.

The protein belongs to the FBPase class 1 family. In terms of assembly, homotetramer. It depends on Mg(2+) as a cofactor.

It is found in the cytoplasm. The enzyme catalyses beta-D-fructose 1,6-bisphosphate + H2O = beta-D-fructose 6-phosphate + phosphate. It participates in carbohydrate biosynthesis; gluconeogenesis. The sequence is that of Fructose-1,6-bisphosphatase class 1 from Acinetobacter baylyi (strain ATCC 33305 / BD413 / ADP1).